The primary structure comprises 163 residues: Nucleotide-binding protein Mmcs_0777 (163 aa).

The protein belongs to the YajQ family.

Functionally, nucleotide-binding protein. The sequence is that of Nucleotide-binding protein Mmcs_0777 from Mycobacterium sp. (strain MCS).